Here is a 411-residue protein sequence, read N- to C-terminus: ATP-dependent Clp protease ATP-binding subunit ClpX (411 aa).

Residues 1–49 (MSDRDIRCSFCGRTQKEVKKLIAGPGVYICDECVKLAYDIIEEDEEEDV) form the ClpX-type ZB domain. 4 residues coordinate Zn(2+): Cys8, Cys11, Cys30, and Cys33. 115–122 (PTGVGKTL) contributes to the ATP binding site.

The protein belongs to the ClpX chaperone family. Component of the ClpX-ClpP complex. Forms a hexameric ring that, in the presence of ATP, binds to fourteen ClpP subunits assembled into a disk-like structure with a central cavity, resembling the structure of eukaryotic proteasomes.

Its function is as follows. ATP-dependent specificity component of the Clp protease. It directs the protease to specific substrates. Can perform chaperone functions in the absence of ClpP. The sequence is that of ATP-dependent Clp protease ATP-binding subunit ClpX from Dictyoglomus thermophilum (strain ATCC 35947 / DSM 3960 / H-6-12).